A 374-amino-acid polypeptide reads, in one-letter code: Coiled-coil domain-containing protein 89 (374 aa).

Positions 1-38 are disordered; the sequence is MRAPMPQKEQAPRMDTSPPEERLEKQNEKLNNQEEEME. Position 16 is a phosphothreonine (T16). Residues 19–32 show a composition bias toward basic and acidic residues; that stretch reads PEERLEKQNEKLNN. Positions 19–350 form a coiled coil; sequence PEERLEKQNE…YDELRLQSEA (332 aa).

It belongs to the CCDC89 family. Interacts with HEY1.

The protein localises to the cytoplasm. It is found in the nucleus. The protein is Coiled-coil domain-containing protein 89 (CCDC89) of Macaca fascicularis (Crab-eating macaque).